Consider the following 1673-residue polypeptide: NBPF family member NBPF26 (1673 aa).

4 EGF-like domains span residues 24–63 (HALQ…EYCQ), 64–102 (HRDP…EDCQ), 105–143 (TPHP…KECQ), and 144–180 (WTDA…QKCE). 17 disulfide bridges follow: cysteine 28–cysteine 41, cysteine 35–cysteine 51, cysteine 53–cysteine 62, cysteine 68–cysteine 79, cysteine 73–cysteine 90, cysteine 92–cysteine 101, cysteine 109–cysteine 121, cysteine 115–cysteine 131, cysteine 133–cysteine 142, cysteine 148–cysteine 159, cysteine 153–cysteine 168, cysteine 170–cysteine 179, cysteine 186–cysteine 198, cysteine 192–cysteine 207, cysteine 209–cysteine 218, cysteine 225–cysteine 236, and cysteine 230–cysteine 246. The region spanning 182-219 (DVNECDIPGHCQHGGTCLNLPGSYQCQCLQGFTGQYCD) is the EGF-like 5; calcium-binding domain. The EGF-like 6 domain occupies 221-258 (LYVPCAHSPCVNGGTCRQTGDFTFECNCLPVPDSTSSA). A coiled-coil region spans residues 337–381 (RQFKEEKLAEQLKQAEELRQYKVLVHSQERELTQLKEKLREGRDA). Disordered stretches follow at residues 423–463 (KLSP…KVPE), 713–734 (EKVQ…EVPE), and 782–828 (WEDA…EGYS). The segment covering 427 to 443 (ENDEDEDEDVQVEEDEK) has biased composition (acidic residues). Olduvai domains are found at residues 427-521 (ENDE…NILP), 698-790 (ENDN…HIIP), 791-879 (ENES…ATGP), 882-937 (SREL…VDMD), 938-1029 (EIEK…PSCP), 1032-1104 (SGEL…PSCP), 1107-1162 (SREL…LDVD), 1163-1255 (RIKK…RSKK), 1256-1348 (ERRR…PSCP), 1351-1423 (SREL…PSCP), 1426-1481 (SREL…LDVD), 1482-1574 (RIKK…RSKK), and 1575-1673 (ERRR…IFPQ). Over residues 452-463 (EVQKTEESKVPE) the composition is skewed to basic and acidic residues. 2 stretches are compositionally biased toward acidic residues: residues 792 to 801 (NESDDEEEEE) and 812 to 824 (ESEE…ESWD). A disordered region spans residues 1242 to 1280 (KGKGKKRRGRRSKKERRRGRKEGEEDQNPPCPRLSRELL). Residues 1243–1261 (GKGKKRRGRRSKKERRRGR) are compositionally biased toward basic residues. The disordered stretch occupies residues 1561–1594 (KGKGKKRRGRRSKKERRRGRKEGEEDQNPPCPRL). Residues 1562-1580 (GKGKKRRGRRSKKERRRGR) are compositionally biased toward basic residues.

It belongs to the NBPF family.

Its subcellular location is the cytoplasm. The sequence is that of NBPF family member NBPF26 from Homo sapiens (Human).